The primary structure comprises 239 residues: Adapter protein MecA (239 aa).

Basic and acidic residues predominate over residues Glu118–Gly128. The segment at Glu118–Arg137 is disordered.

It belongs to the MecA family. As to quaternary structure, homodimer.

Enables the recognition and targeting of unfolded and aggregated proteins to the ClpC protease or to other proteins involved in proteolysis. The sequence is that of Adapter protein MecA from Staphylococcus aureus (strain USA300).